We begin with the raw amino-acid sequence, 1104 residues long: Lon protease homolog, mitochondrial (1104 aa).

Residues 1–58 (MLPLRAFARLAQRPRLSRPTQLARSSLPRPSPSRPAAHYLALAPAPSTRFLHSSPPVL) constitute a mitochondrion transit peptide. The segment at 8-144 (ARLAQRPRLS…PGAGGPKEVA (137 aa)) is disordered. The segment covering 22–46 (LARSSLPRPSPSRPAAHYLALAPAP) has biased composition (low complexity). Positions 80–103 (KQDDQVEKPLPDAESSKSAEERAK) are enriched in basic and acidic residues. Residues 104 to 128 (SQSSKPDIKASSSDSVSSSAPAPGS) show a composition bias toward low complexity. Positions 129-139 (ADGGSPPGAGG) are enriched in gly residues. Positions 155-444 (VLAIPITHRP…RALVLLKKEL (290 aa)) constitute a Lon N-terminal domain. 597–604 (GPPGVGKT) contributes to the ATP binding site. The 188-residue stretch at 895 to 1082 (SPPAGVSTGL…RQVLHEAFRG (188 aa)) folds into the Lon proteolytic domain. Catalysis depends on residues serine 987 and lysine 1030.

It belongs to the peptidase S16 family. In terms of assembly, homohexamer or homoheptamer. Organized in a ring with a central cavity.

Its subcellular location is the mitochondrion matrix. The catalysed reaction is Hydrolysis of proteins in presence of ATP.. Functionally, ATP-dependent serine protease that mediates the selective degradation of misfolded, unassembled or oxidatively damaged polypeptides as well as certain short-lived regulatory proteins in the mitochondrial matrix. May also have a chaperone function in the assembly of inner membrane protein complexes. Participates in the regulation of mitochondrial gene expression and in the maintenance of the integrity of the mitochondrial genome. Binds to mitochondrial DNA in a site-specific manner. This Cryptococcus neoformans var. neoformans serotype D (strain B-3501A) (Filobasidiella neoformans) protein is Lon protease homolog, mitochondrial.